A 313-amino-acid chain; its full sequence is Porphobilinogen deaminase (313 aa).

Residue Cys-242 is modified to S-(dipyrrolylmethanemethyl)cysteine.

The protein belongs to the HMBS family. In terms of assembly, monomer. Dipyrromethane is required as a cofactor.

It carries out the reaction 4 porphobilinogen + H2O = hydroxymethylbilane + 4 NH4(+). Its pathway is porphyrin-containing compound metabolism; protoporphyrin-IX biosynthesis; coproporphyrinogen-III from 5-aminolevulinate: step 2/4. Functionally, tetrapolymerization of the monopyrrole PBG into the hydroxymethylbilane pre-uroporphyrinogen in several discrete steps. The polypeptide is Porphobilinogen deaminase (Pseudomonas putida (strain GB-1)).